The primary structure comprises 361 residues: DNA double-strand break repair protein Mre11 (361 aa).

Mn(2+) contacts are provided by Asp7, His9, Asp48, and Asn83. His84 serves as the catalytic Proton donor. Residues His176, His204, and His206 each coordinate Mn(2+).

It belongs to the MRE11/RAD32 family. In terms of assembly, homodimer. Forms a heterotetramer composed of two Mre11 subunits and two Rad50 subunits. It depends on Mn(2+) as a cofactor.

Its activity is regulated as follows. Nuclease activity is regulated by Rad50. Its function is as follows. Part of the Rad50/Mre11 complex, which is involved in the early steps of DNA double-strand break (DSB) repair. The complex may facilitate opening of the processed DNA ends to aid in the recruitment of HerA and NurA. Mre11 binds to DSB ends and has both double-stranded 3'-5' exonuclease activity and single-stranded endonuclease activity. The chain is DNA double-strand break repair protein Mre11 from Nanoarchaeum equitans (strain Kin4-M).